Here is a 149-residue protein sequence, read N- to C-terminus: 3-dehydroquinate dehydratase (149 aa).

Tyr-26 serves as the catalytic Proton acceptor. Substrate is bound by residues Asn-77, His-83, and Asp-90. Residue His-103 is the Proton donor of the active site. Residues 104–105 (LS) and Arg-114 each bind substrate.

The protein belongs to the type-II 3-dehydroquinase family. Homododecamer.

The enzyme catalyses 3-dehydroquinate = 3-dehydroshikimate + H2O. It participates in metabolic intermediate biosynthesis; chorismate biosynthesis; chorismate from D-erythrose 4-phosphate and phosphoenolpyruvate: step 3/7. Catalyzes a trans-dehydration via an enolate intermediate. The sequence is that of 3-dehydroquinate dehydratase (aroQ) from Haemophilus influenzae (strain ATCC 51907 / DSM 11121 / KW20 / Rd).